We begin with the raw amino-acid sequence, 179 residues long: Inner membrane-spanning protein YciB (179 aa).

The next 5 membrane-spanning stretches (helical) occupy residues 22–42 (IYAATTALIVATAIVLIYSWV), 50–70 (MALITFVLVAVFGGLTLFFHN), 76–96 (WKVTVIYALFAGALLFSQWVM), 121–141 (LAWAVFFILCGLANIYIAFWL), and 149–169 (FKVFGLTALTLVFTLLSGIYI).

It belongs to the YciB family.

It is found in the cell inner membrane. In terms of biological role, plays a role in cell envelope biogenesis, maintenance of cell envelope integrity and membrane homeostasis. The sequence is that of Inner membrane-spanning protein YciB from Klebsiella pneumoniae (strain 342).